Reading from the N-terminus, the 417-residue chain is NADH-quinone oxidoreductase subunit D (417 aa).

It belongs to the complex I 49 kDa subunit family. In terms of assembly, NDH-1 is composed of 14 different subunits. Subunits NuoB, C, D, E, F, and G constitute the peripheral sector of the complex.

The protein resides in the cell inner membrane. It carries out the reaction a quinone + NADH + 5 H(+)(in) = a quinol + NAD(+) + 4 H(+)(out). Functionally, NDH-1 shuttles electrons from NADH, via FMN and iron-sulfur (Fe-S) centers, to quinones in the respiratory chain. The immediate electron acceptor for the enzyme in this species is believed to be ubiquinone. Couples the redox reaction to proton translocation (for every two electrons transferred, four hydrogen ions are translocated across the cytoplasmic membrane), and thus conserves the redox energy in a proton gradient. The protein is NADH-quinone oxidoreductase subunit D of Francisella philomiragia subsp. philomiragia (strain ATCC 25017 / CCUG 19701 / FSC 153 / O#319-036).